The following is a 139-amino-acid chain: Gonadotropin subunit beta-2 (139 aa).

A signal peptide spans 1 to 24 (MFPLVLSLFLGATSDIWPLAPAEA). 6 disulfide bridges follow: cysteine 30–cysteine 78, cysteine 44–cysteine 93, cysteine 47–cysteine 131, cysteine 55–cysteine 109, cysteine 59–cysteine 111, and cysteine 114–cysteine 121. N-linked (GlcNAc...) asparagine glycosylation is present at asparagine 34.

The protein belongs to the glycoprotein hormones subunit beta family. Heterodimer of an alpha and a beta chain.

It localises to the secreted. In terms of biological role, involved in gametogenesis and steroidogenesis. The sequence is that of Gonadotropin subunit beta-2 (cgbb) from Morone saxatilis (Striped bass).